Here is a 114-residue protein sequence, read N- to C-terminus: NADH-quinone oxidoreductase subunit K 2 (114 aa).

Transmembrane regions (helical) follow at residues 1–21, 29–49, and 62–82; these read MIVP…LGVF, LIMI…AFIG, and FVLF…AIIV.

It belongs to the complex I subunit 4L family. In terms of assembly, NDH-1 is composed of 14 different subunits. Subunits NuoA, H, J, K, L, M, N constitute the membrane sector of the complex.

The protein resides in the cell inner membrane. The catalysed reaction is a quinone + NADH + 5 H(+)(in) = a quinol + NAD(+) + 4 H(+)(out). Functionally, NDH-1 shuttles electrons from NADH, via FMN and iron-sulfur (Fe-S) centers, to quinones in the respiratory chain. The immediate electron acceptor for the enzyme in this species is believed to be ubiquinone. Couples the redox reaction to proton translocation (for every two electrons transferred, four hydrogen ions are translocated across the cytoplasmic membrane), and thus conserves the redox energy in a proton gradient. The sequence is that of NADH-quinone oxidoreductase subunit K 2 from Syntrophobacter fumaroxidans (strain DSM 10017 / MPOB).